Reading from the N-terminus, the 210-residue chain is Small ribosomal subunit protein uS3 (210 aa).

Residues Ile38 to Arg106 form the KH type-2 domain.

This sequence belongs to the universal ribosomal protein uS3 family. Part of the 30S ribosomal subunit. Forms a tight complex with proteins S10 and S14.

Functionally, binds the lower part of the 30S subunit head. Binds mRNA in the 70S ribosome, positioning it for translation. The chain is Small ribosomal subunit protein uS3 from Trichlorobacter lovleyi (strain ATCC BAA-1151 / DSM 17278 / SZ) (Geobacter lovleyi).